Here is a 75-residue protein sequence, read N- to C-terminus: Brevinin-2SN2 (75 aa).

The N-terminal stretch at 1 to 22 is a signal peptide; it reads MFTMKKSLLFLFFLGTISLSFC. Residues 23-40 constitute a propeptide, removed in mature form; the sequence is EEERGADEDDGGEMTEEE. The cysteines at positions 69 and 75 are disulfide-linked.

This sequence belongs to the frog skin active peptide (FSAP) family. Brevinin subfamily. In terms of tissue distribution, expressed by the skin glands.

The protein resides in the secreted. Functionally, antimicrobial peptide. Active against some Gram-negative and a variety of Gram-positive bacterial strains. Active against fungus C.glabrata 090902 but not against C.albicans ATCC 10231. Shows hemolytic activity against human erythrocytes. This Sylvirana spinulosa (Fine-spined frog) protein is Brevinin-2SN2.